Reading from the N-terminus, the 312-residue chain is tRNA uridine(34) hydroxylase (312 aa).

In terms of domain architecture, Rhodanese spans 124–218 (SDPEVLLIDT…YLEEVPEQES (95 aa)). The active-site Cysteine persulfide intermediate is Cys-178. Residues 293 to 312 (AKARNQPHPIGRNYRLPSEA) are disordered.

Belongs to the TrhO family.

It carries out the reaction uridine(34) in tRNA + AH2 + O2 = 5-hydroxyuridine(34) in tRNA + A + H2O. Functionally, catalyzes oxygen-dependent 5-hydroxyuridine (ho5U) modification at position 34 in tRNAs. The chain is tRNA uridine(34) hydroxylase from Pseudomonas syringae pv. syringae (strain B728a).